The following is a 161-amino-acid chain: RNA pyrophosphohydrolase (161 aa).

A Nudix hydrolase domain is found at 12-154; it reads PYRPGVGMMI…KRKLYQAVVK (143 aa). The Nudix box motif lies at 46–67; the sequence is GGIVPGETPSIAAMREMLEEIG.

The protein belongs to the Nudix hydrolase family. RppH subfamily. A divalent metal cation serves as cofactor.

Functionally, accelerates the degradation of transcripts by removing pyrophosphate from the 5'-end of triphosphorylated RNA, leading to a more labile monophosphorylated state that can stimulate subsequent ribonuclease cleavage. The protein is RNA pyrophosphohydrolase of Rickettsia bellii (strain OSU 85-389).